The primary structure comprises 487 residues: N-succinylglutamate 5-semialdehyde dehydrogenase (487 aa).

The segment at 1–23 (MTHFIKGQWHTGKGHDVASSNPA) is disordered. Position 220-225 (220-225 (GSSRTG)) interacts with NAD(+). Catalysis depends on residues E243 and C277.

Belongs to the aldehyde dehydrogenase family. AstD subfamily.

The catalysed reaction is N-succinyl-L-glutamate 5-semialdehyde + NAD(+) + H2O = N-succinyl-L-glutamate + NADH + 2 H(+). It participates in amino-acid degradation; L-arginine degradation via AST pathway; L-glutamate and succinate from L-arginine: step 4/5. Catalyzes the NAD-dependent reduction of succinylglutamate semialdehyde into succinylglutamate. In Shewanella oneidensis (strain ATCC 700550 / JCM 31522 / CIP 106686 / LMG 19005 / NCIMB 14063 / MR-1), this protein is N-succinylglutamate 5-semialdehyde dehydrogenase.